We begin with the raw amino-acid sequence, 408 residues long: 1-deoxy-D-xylulose 5-phosphate reductoisomerase (408 aa).

Residues Thr19, Gly20, Ser21, Ile22, Gly45, Asn47, and Asn130 each contribute to the NADPH site. Residue Lys131 participates in 1-deoxy-D-xylulose 5-phosphate binding. Residue Glu132 coordinates NADPH. Residue Asp156 coordinates Mn(2+). Residues Ser157, Glu158, Ser182, and His205 each coordinate 1-deoxy-D-xylulose 5-phosphate. Glu158 contacts Mn(2+). Residue Gly211 participates in NADPH binding. The 1-deoxy-D-xylulose 5-phosphate site is built by Ser218, Asn223, Lys224, and Glu227. Glu227 provides a ligand contact to Mn(2+).

This sequence belongs to the DXR family. Mg(2+) serves as cofactor. It depends on Mn(2+) as a cofactor.

The catalysed reaction is 2-C-methyl-D-erythritol 4-phosphate + NADP(+) = 1-deoxy-D-xylulose 5-phosphate + NADPH + H(+). It functions in the pathway isoprenoid biosynthesis; isopentenyl diphosphate biosynthesis via DXP pathway; isopentenyl diphosphate from 1-deoxy-D-xylulose 5-phosphate: step 1/6. Functionally, catalyzes the NADPH-dependent rearrangement and reduction of 1-deoxy-D-xylulose-5-phosphate (DXP) to 2-C-methyl-D-erythritol 4-phosphate (MEP). The protein is 1-deoxy-D-xylulose 5-phosphate reductoisomerase of Gluconobacter oxydans (strain 621H) (Gluconobacter suboxydans).